Consider the following 190-residue polypeptide: DNA dC-&gt;dU-editing enzyme APOBEC-3C (190 aa).

Residues 29–138 (DRNETWLCFT…PCYQEGLRSL (110 aa)) form the CMP/dCMP-type deaminase domain. Residues 40–86 (EGIKRRSVVSWKTGVFRNQVDSETHCHAERCFLSWFCDDILSPNTKY) form a (Microbial infection) Required for interaction with human foamy virus protein Bet region. H66 is a Zn(2+) binding site. E68 serves as the catalytic Proton donor. C97 and C100 together coordinate Zn(2+).

This sequence belongs to the cytidine and deoxycytidylate deaminase family. As to quaternary structure, homodimer. Interacts with TRIB3. Interacts with AGO2. In terms of assembly, (Microbial infection) Interacts with human foamy virus protein Bet; this interaction does not induce APOBEC3C degradation but prevents its dimerization and incorporation into the virion by binding of Bet close to or within the APOBEC3C dimerization site. (Microbial infection) Interacts with HIV-1 Vif. It depends on Zn(2+) as a cofactor. As to expression, expressed in spleen, testes, peripherical blood lymphocytes, heart, thymus, prostate and ovary.

The protein localises to the nucleus. The protein resides in the cytoplasm. It carries out the reaction a 2'-deoxycytidine in single-stranded DNA + H2O + H(+) = a 2'-deoxyuridine in single-stranded DNA + NH4(+). With respect to regulation, (Microbial infection) Antiviral activity is neutralized by the HIV-1 virion infectivity factor (Vif), that prevents its incorporation into progeny HIV-1 virions by both inhibiting its translation and/or by inducing its ubiquitination and subsequent degradation by the 26S proteasome. Its function is as follows. DNA deaminase (cytidine deaminase) which acts as an inhibitor of retrovirus replication and retrotransposon mobility via deaminase-dependent and -independent mechanisms. After the penetration of retroviral nucleocapsids into target cells of infection and the initiation of reverse transcription, it can induce the conversion of cytosine to uracil in the minus-sense single-strand viral DNA, leading to G-to-A hypermutations in the subsequent plus-strand viral DNA. The resultant detrimental levels of mutations in the proviral genome, along with a deamination-independent mechanism that works prior to the proviral integration, together exert efficient antiretroviral effects in infected target cells. Selectively targets single-stranded DNA and does not deaminate double-stranded DNA or single- or double-stranded RNA. Exhibits antiviral activity against simian immunodeficiency virus (SIV), hepatitis B virus (HBV), herpes simplex virus 1 (HHV-1) and Epstein-Barr virus (EBV) and may inhibit the mobility of LTR and non-LTR retrotransposons. May also play a role in the epigenetic regulation of gene expression through the process of active DNA demethylation. The chain is DNA dC-&gt;dU-editing enzyme APOBEC-3C (APOBEC3C) from Homo sapiens (Human).